Here is a 165-residue protein sequence, read N- to C-terminus: Chemotaxis protein CheW (165 aa).

This sequence belongs to the CheW family.

In terms of biological role, plays an essential role in chemotaxis signal transduction system in order to colonize the host stomach. The polypeptide is Chemotaxis protein CheW (Helicobacter pylori (strain ATCC 700392 / 26695) (Campylobacter pylori)).